Here is a 236-residue protein sequence, read N- to C-terminus: Ras-related protein RabY (236 aa).

G18–T25 provides a ligand contact to GTP. Positions Y40–F48 match the Effector region motif. GTP contacts are provided by residues D66–D70 and N126–D129. Residues Q192–Q225 show a composition bias toward low complexity. Residues Q192–Q236 are disordered. C233 bears the Cysteine methyl ester mark. A lipid anchor (S-geranylgeranyl cysteine) is attached at C233. A propeptide spans L234–Q236 (removed in mature form).

This sequence belongs to the small GTPase superfamily. Rab family.

It is found in the cell membrane. The chain is Ras-related protein RabY (rabY) from Dictyostelium discoideum (Social amoeba).